The primary structure comprises 208 residues: Small ribosomal subunit protein uS4 (208 aa).

The 66-residue stretch at 98 to 163 (SRLDNVVYRA…LTPFVIARAV (66 aa)) folds into the S4 RNA-binding domain.

The protein belongs to the universal ribosomal protein uS4 family. Part of the 30S ribosomal subunit. Contacts protein S5. The interaction surface between S4 and S5 is involved in control of translational fidelity.

In terms of biological role, one of the primary rRNA binding proteins, it binds directly to 16S rRNA where it nucleates assembly of the body of the 30S subunit. Functionally, with S5 and S12 plays an important role in translational accuracy. This is Small ribosomal subunit protein uS4 from Acidothermus cellulolyticus (strain ATCC 43068 / DSM 8971 / 11B).